The sequence spans 57 residues: Putative secreted protein MT0250 (57 aa).

The first 32 residues, 1–32 (MNRIVAPAAASVVVGLLLGAAAIFGVTLMVQQ), serve as a signal peptide directing secretion. A disordered region spans residues 34 to 57 (KKPPLPGGDPSSSVLNRVEYGNRS).

In Mycobacterium tuberculosis (strain CDC 1551 / Oshkosh), this protein is Putative secreted protein MT0250.